The following is a 304-amino-acid chain: MNLSVKLPGLNLKNPIMPASGCFGFGKEYSEYYDLSLLGGVMMKAATQFERLGNPTPRVAETSAGMLNAIGLQNPGVQQIIDHEVPRLAKYDTSIIANIAGSSIEEYEFVAASFNQTTDVDALELNISCPNVKEGGIQFGTDPFMAKKVTEVVKKASNKPVYVKLSPNVHNIVEMAKAVEEAGADGLSMINTLTGMKIHLPSRKPLIANKTGGLSGPAIKPVAIRMIYEVRQQVSIPIIGMGGITSAEDVLEYLIAGADAVAVGTANFQNPFVCVDIINELPEVLEQYGFNSIEDVIEKRGITV.

Residues Ser-20 and 44–45 (KA) contribute to the FMN site. Substrate contacts are provided by residues Lys-44 and 68 to 72 (NAIGL). FMN contacts are provided by Asn-98 and Asn-126. Position 126 (Asn-126) interacts with substrate. Cys-129 (nucleophile) is an active-site residue. Positions 164 and 190 each coordinate FMN. Position 191–192 (191–192 (NT)) interacts with substrate. FMN-binding positions include Gly-216, 242–243 (GG), and 264–265 (GT).

Belongs to the dihydroorotate dehydrogenase family. Type 1 subfamily. Heterotetramer of 2 PyrK and 2 PyrD type B subunits. It depends on FMN as a cofactor.

Its subcellular location is the cytoplasm. The enzyme catalyses (S)-dihydroorotate + NAD(+) = orotate + NADH + H(+). It functions in the pathway pyrimidine metabolism; UMP biosynthesis via de novo pathway; orotate from (S)-dihydroorotate (NAD(+) route): step 1/1. Its function is as follows. Catalyzes the conversion of dihydroorotate to orotate with NAD(+) as electron acceptor. The sequence is that of Dihydroorotate dehydrogenase B (NAD(+)), catalytic subunit (pyrD) from Oceanobacillus iheyensis (strain DSM 14371 / CIP 107618 / JCM 11309 / KCTC 3954 / HTE831).